The primary structure comprises 98 residues: Aspartyl/glutamyl-tRNA(Asn/Gln) amidotransferase subunit C (98 aa).

The protein belongs to the GatC family. In terms of assembly, heterotrimer of A, B and C subunits.

It carries out the reaction L-glutamyl-tRNA(Gln) + L-glutamine + ATP + H2O = L-glutaminyl-tRNA(Gln) + L-glutamate + ADP + phosphate + H(+). The catalysed reaction is L-aspartyl-tRNA(Asn) + L-glutamine + ATP + H2O = L-asparaginyl-tRNA(Asn) + L-glutamate + ADP + phosphate + 2 H(+). In terms of biological role, allows the formation of correctly charged Asn-tRNA(Asn) or Gln-tRNA(Gln) through the transamidation of misacylated Asp-tRNA(Asn) or Glu-tRNA(Gln) in organisms which lack either or both of asparaginyl-tRNA or glutaminyl-tRNA synthetases. The reaction takes place in the presence of glutamine and ATP through an activated phospho-Asp-tRNA(Asn) or phospho-Glu-tRNA(Gln). This Beutenbergia cavernae (strain ATCC BAA-8 / DSM 12333 / CCUG 43141 / JCM 11478 / NBRC 16432 / NCIMB 13614 / HKI 0122) protein is Aspartyl/glutamyl-tRNA(Asn/Gln) amidotransferase subunit C.